The following is a 111-amino-acid chain: Putative single-stranded DNA-binding protein ycf41 (111 aa).

The region spanning 1–98 is the SSB domain; that stretch reads MNKCNLLVQI…FSTSRIFKYK (98 aa).

It localises to the plastid. It is found in the chloroplast. The polypeptide is Putative single-stranded DNA-binding protein ycf41 (ycf41) (Porphyra purpurea (Red seaweed)).